The sequence spans 136 residues: uncharacterized protein (136 aa).

A helical membrane pass occupies residues 19–39 (LGFPLGTALLLIIIFSLSGIF). Disordered regions lie at residues 54 to 87 (SLAN…LSVP) and 112 to 136 (KLTV…VPLY).

The protein localises to the membrane. This is an uncharacterized protein from Arabidopsis thaliana (Mouse-ear cress).